The chain runs to 256 residues: uncharacterized protein (256 aa).

Residues Ile-18, Ser-37, Lys-46, Asp-66, Tyr-164, Lys-168, Val-197, and Thr-199 each contribute to the NADP(+) site. The active-site Proton donor is the Tyr-164. Lys-168 (lowers pKa of active site Tyr) is an active-site residue.

It belongs to the short-chain dehydrogenases/reductases (SDR) family.

The protein resides in the cytoplasm. This is an uncharacterized protein from Saccharomyces cerevisiae (strain ATCC 204508 / S288c) (Baker's yeast).